Reading from the N-terminus, the 336-residue chain is Methionine import ATP-binding protein MetN (336 aa).

The region spanning 2-254 (IKIKNLKKYY…PNAKMKEFLG (253 aa)) is the ABC transporter domain. 34–41 (GHSGAGKS) contributes to the ATP binding site.

It belongs to the ABC transporter superfamily. Methionine importer (TC 3.A.1.24) family. As to quaternary structure, the complex is composed of two ATP-binding proteins (MetN), two transmembrane proteins (MetI) and a solute-binding protein (MetQ).

The protein localises to the cell inner membrane. It catalyses the reaction L-methionine(out) + ATP + H2O = L-methionine(in) + ADP + phosphate + H(+). The catalysed reaction is D-methionine(out) + ATP + H2O = D-methionine(in) + ADP + phosphate + H(+). Part of the ABC transporter complex MetNIQ involved in methionine import. Responsible for energy coupling to the transport system. In Campylobacter jejuni subsp. jejuni serotype O:2 (strain ATCC 700819 / NCTC 11168), this protein is Methionine import ATP-binding protein MetN.